A 344-amino-acid chain; its full sequence is Dihydroorotate dehydrogenase (quinone) (344 aa).

FMN-binding positions include 65-69 (AGFDK) and Thr89. Lys69 serves as a coordination point for substrate. Position 114–118 (114–118 (NRMGF)) interacts with substrate. Asn145 and Asn178 together coordinate FMN. Residue Asn178 coordinates substrate. Ser181 acts as the Nucleophile in catalysis. Substrate is bound at residue Asn183. Positions 215 and 243 each coordinate FMN. Position 244–245 (244–245 (NT)) interacts with substrate. FMN-binding positions include Gly269, Gly298, and 319–320 (YT).

This sequence belongs to the dihydroorotate dehydrogenase family. Type 2 subfamily. In terms of assembly, monomer. FMN serves as cofactor.

It localises to the cell membrane. It catalyses the reaction (S)-dihydroorotate + a quinone = orotate + a quinol. It participates in pyrimidine metabolism; UMP biosynthesis via de novo pathway; orotate from (S)-dihydroorotate (quinone route): step 1/1. Functionally, catalyzes the conversion of dihydroorotate to orotate with quinone as electron acceptor. This is Dihydroorotate dehydrogenase (quinone) from Clavibacter sepedonicus (Clavibacter michiganensis subsp. sepedonicus).